We begin with the raw amino-acid sequence, 353 residues long: Protein-glutamate methylesterase/protein-glutamine glutaminase 3 (353 aa).

One can recognise a Response regulatory domain in the interval 3-120; it reads KVLIADDSAL…SSSSDMKKVA (118 aa). Asp54 is modified (4-aspartylphosphate). Positions 158–353 constitute a CheB-type methylesterase domain; sequence PRPGREVTKA…AREIIRAVNR (196 aa). Active-site residues include Ser173, His200, and Asp296.

It belongs to the CheB family. Phosphorylated by CheA. Phosphorylation of the N-terminal regulatory domain activates the methylesterase activity.

The protein localises to the cytoplasm. It catalyses the reaction [protein]-L-glutamate 5-O-methyl ester + H2O = L-glutamyl-[protein] + methanol + H(+). It carries out the reaction L-glutaminyl-[protein] + H2O = L-glutamyl-[protein] + NH4(+). Involved in chemotaxis. Part of a chemotaxis signal transduction system that modulates chemotaxis in response to various stimuli. Catalyzes the demethylation of specific methylglutamate residues introduced into the chemoreceptors (methyl-accepting chemotaxis proteins or MCP) by CheR. Also mediates the irreversible deamidation of specific glutamine residues to glutamic acid. In Syntrophomonas wolfei subsp. wolfei (strain DSM 2245B / Goettingen), this protein is Protein-glutamate methylesterase/protein-glutamine glutaminase 3.